The sequence spans 365 residues: Holliday junction branch migration complex subunit RuvB (365 aa).

The large ATPase domain (RuvB-L) stretch occupies residues 1-191 (MSPELGGGYD…FGFTAHMDFY (191 aa)). Residues L30, R31, G72, K75, T76, S77, 138 to 140 (EDF), R181, Y191, and R228 contribute to the ATP site. T76 contacts Mg(2+). A small ATPAse domain (RuvB-S) region spans residues 192-262 (EPAELKQILM…IAHAALAVYD (71 aa)). Positions 265–365 (QLGLDRLDRS…QASLFDPEDP (101 aa)) are head domain (RuvB-H). Residues R320 and R325 each coordinate DNA.

The protein belongs to the RuvB family. In terms of assembly, homohexamer. Forms an RuvA(8)-RuvB(12)-Holliday junction (HJ) complex. HJ DNA is sandwiched between 2 RuvA tetramers; dsDNA enters through RuvA and exits via RuvB. An RuvB hexamer assembles on each DNA strand where it exits the tetramer. Each RuvB hexamer is contacted by two RuvA subunits (via domain III) on 2 adjacent RuvB subunits; this complex drives branch migration. In the full resolvosome a probable DNA-RuvA(4)-RuvB(12)-RuvC(2) complex forms which resolves the HJ.

The protein resides in the cytoplasm. It carries out the reaction ATP + H2O = ADP + phosphate + H(+). Functionally, the RuvA-RuvB-RuvC complex processes Holliday junction (HJ) DNA during genetic recombination and DNA repair, while the RuvA-RuvB complex plays an important role in the rescue of blocked DNA replication forks via replication fork reversal (RFR). RuvA specifically binds to HJ cruciform DNA, conferring on it an open structure. The RuvB hexamer acts as an ATP-dependent pump, pulling dsDNA into and through the RuvAB complex. RuvB forms 2 homohexamers on either side of HJ DNA bound by 1 or 2 RuvA tetramers; 4 subunits per hexamer contact DNA at a time. Coordinated motions by a converter formed by DNA-disengaged RuvB subunits stimulates ATP hydrolysis and nucleotide exchange. Immobilization of the converter enables RuvB to convert the ATP-contained energy into a lever motion, pulling 2 nucleotides of DNA out of the RuvA tetramer per ATP hydrolyzed, thus driving DNA branch migration. The RuvB motors rotate together with the DNA substrate, which together with the progressing nucleotide cycle form the mechanistic basis for DNA recombination by continuous HJ branch migration. Branch migration allows RuvC to scan DNA until it finds its consensus sequence, where it cleaves and resolves cruciform DNA. The sequence is that of Holliday junction branch migration complex subunit RuvB from Rhodococcus opacus (strain B4).